A 637-amino-acid chain; its full sequence is DNA damage-binding protein CMR1 (637 aa).

Disordered stretches follow at residues 1–91 (MIES…EEEA) and 144–168 (LVDT…TERR). Composition is skewed to basic and acidic residues over residues 8-23 (EQER…RLMK) and 74-91 (AGHE…EEEA). 5 WD repeats span residues 185–226 (VTPK…FASN), 255–295 (HARS…SEEI), 297–321 (AGEE…VYMD), 361–401 (VCEK…SVVK), and 431–470 (KARQ…LFSE). 2 disordered regions span residues 482–508 (SNKP…LSWL) and 525–549 (KQEQ…PTRI). WD repeat units lie at residues 556-598 (GKWL…LRSL) and 602-637 (NLVT…SPDP).

It belongs to the WD repeat DDB2/WDR76 family.

Its function is as follows. DNA-binding protein that binds to both single- and double-stranded DNA. Binds preferentially to UV-damaged DNA. May be involved in DNA-metabolic processes. The polypeptide is DNA damage-binding protein CMR1 (Mycosarcoma maydis (Corn smut fungus)).